The sequence spans 157 residues: Aspartate carbamoyltransferase regulatory chain (157 aa).

Positions 108, 113, 138, and 141 each coordinate Zn(2+).

The protein belongs to the PyrI family. In terms of assembly, contains catalytic and regulatory chains. Zn(2+) is required as a cofactor.

In terms of biological role, involved in allosteric regulation of aspartate carbamoyltransferase. The polypeptide is Aspartate carbamoyltransferase regulatory chain (Ignicoccus hospitalis (strain KIN4/I / DSM 18386 / JCM 14125)).